The sequence spans 120 residues: Phosphoribosyl-AMP cyclohydrolase (120 aa).

Mg(2+) is bound at residue Asp74. Cys75 contributes to the Zn(2+) binding site. Mg(2+)-binding residues include Asp76 and Asp78. Cys91 and Cys98 together coordinate Zn(2+).

This sequence belongs to the PRA-CH family. Homodimer. Mg(2+) is required as a cofactor. Requires Zn(2+) as cofactor.

The protein resides in the cytoplasm. It catalyses the reaction 1-(5-phospho-beta-D-ribosyl)-5'-AMP + H2O = 1-(5-phospho-beta-D-ribosyl)-5-[(5-phospho-beta-D-ribosylamino)methylideneamino]imidazole-4-carboxamide. The protein operates within amino-acid biosynthesis; L-histidine biosynthesis; L-histidine from 5-phospho-alpha-D-ribose 1-diphosphate: step 3/9. In terms of biological role, catalyzes the hydrolysis of the adenine ring of phosphoribosyl-AMP. This is Phosphoribosyl-AMP cyclohydrolase from Natronomonas pharaonis (strain ATCC 35678 / DSM 2160 / CIP 103997 / JCM 8858 / NBRC 14720 / NCIMB 2260 / Gabara) (Halobacterium pharaonis).